We begin with the raw amino-acid sequence, 341 residues long: L-threonine 3-dehydrogenase (341 aa).

A Zn(2+)-binding site is contributed by C38. Residues T40 and H43 each act as charge relay system in the active site. Zn(2+) contacts are provided by H63, E64, C93, C96, C99, and C107. NAD(+) is bound by residues I175, D195, R200, 262 to 264 (LGI), and 286 to 287 (IY).

This sequence belongs to the zinc-containing alcohol dehydrogenase family. As to quaternary structure, homotetramer. The cofactor is Zn(2+).

It is found in the cytoplasm. The catalysed reaction is L-threonine + NAD(+) = (2S)-2-amino-3-oxobutanoate + NADH + H(+). The protein operates within amino-acid degradation; L-threonine degradation via oxydo-reductase pathway; glycine from L-threonine: step 1/2. In terms of biological role, catalyzes the NAD(+)-dependent oxidation of L-threonine to 2-amino-3-ketobutyrate. The polypeptide is L-threonine 3-dehydrogenase (Escherichia coli (strain K12 / MC4100 / BW2952)).